The chain runs to 995 residues: Integrator complex subunit 8 (995 aa).

T18 carries the phosphothreonine modification. Positions 24–29 (WFEFLL) match the WFEF motif motif. TPR repeat units lie at residues 250 to 288 (CQVC…LAEI), 320 to 356 (SQQL…TLPV), 570 to 603 (VYIL…VTEF), and 833 to 866 (HAWL…CSDF).

The protein belongs to the Integrator subunit 8 family. As to quaternary structure, component of the Integrator complex, composed of core subunits INTS1, INTS2, INTS3, INTS4, INTS5, INTS6, INTS7, INTS8, INTS9/RC74, INTS10, INTS11/CPSF3L, INTS12, INTS13, INTS14 and INTS15. The core complex associates with protein phosphatase 2A subunits PPP2CA and PPP2R1A, to form the Integrator-PP2A (INTAC) complex.

The protein resides in the nucleus. Its subcellular location is the chromosome. Component of the integrator complex, a multiprotein complex that terminates RNA polymerase II (Pol II) transcription in the promoter-proximal region of genes. The integrator complex provides a quality checkpoint during transcription elongation by driving premature transcription termination of transcripts that are unfavorably configured for transcriptional elongation: the complex terminates transcription by (1) catalyzing dephosphorylation of the C-terminal domain (CTD) of Pol II subunit POLR2A/RPB1 and SUPT5H/SPT5, (2) degrading the exiting nascent RNA transcript via endonuclease activity and (3) promoting the release of Pol II from bound DNA. The integrator complex is also involved in terminating the synthesis of non-coding Pol II transcripts, such as enhancer RNAs (eRNAs), small nuclear RNAs (snRNAs), telomerase RNAs and long non-coding RNAs (lncRNAs). Within the integrator complex, INTS8 is required for the recruitment of protein phosphatase 2A (PP2A) to transcription pause-release checkpoint. The chain is Integrator complex subunit 8 (Ints8) from Mus musculus (Mouse).